Consider the following 366-residue polypeptide: Ubiquitin carboxyl-terminal hydrolase 46 (366 aa).

The 331-residue stretch at 35-365 folds into the USP domain; sequence FGLVNFGNTC…SGYILFYQSR (331 aa). The Nucleophile role is filled by Cys44. Zn(2+) contacts are provided by Cys182, Cys185, Cys229, and Cys232. His313 (proton acceptor) is an active-site residue.

Belongs to the peptidase C19 family. USP12/USP46 subfamily. In terms of assembly, interacts with WDR48. Interacts with WDR20. Interacts with DMWD. Component of the USP46/WDR20/WDR48 deubiquitinating complex. In terms of tissue distribution, broadly expressed.

It localises to the cytoplasm. The enzyme catalyses Thiol-dependent hydrolysis of ester, thioester, amide, peptide and isopeptide bonds formed by the C-terminal Gly of ubiquitin (a 76-residue protein attached to proteins as an intracellular targeting signal).. Activated by interaction with WDR48. Functionally, deubiquitinating enzyme that plays a role in behavior, possibly by regulating GABA action. May act by mediating the deubiquitination of GAD1/GAD67. Has almost no deubiquitinating activity by itself and requires the interaction with WDR48 to have a high activity. Not involved in deubiquitination of monoubiquitinated FANCD2. The protein is Ubiquitin carboxyl-terminal hydrolase 46 (USP46) of Homo sapiens (Human).